The following is a 161-amino-acid chain: 3-isopropylmalate dehydratase small subunit 1 (161 aa).

It belongs to the LeuD family. LeuD type 2 subfamily. As to quaternary structure, heterodimer of LeuC and LeuD.

It carries out the reaction (2R,3S)-3-isopropylmalate = (2S)-2-isopropylmalate. It functions in the pathway amino-acid biosynthesis; L-leucine biosynthesis; L-leucine from 3-methyl-2-oxobutanoate: step 2/4. In terms of biological role, catalyzes the isomerization between 2-isopropylmalate and 3-isopropylmalate, via the formation of 2-isopropylmaleate. This chain is 3-isopropylmalate dehydratase small subunit 1 (leuD1), found in Archaeoglobus fulgidus (strain ATCC 49558 / DSM 4304 / JCM 9628 / NBRC 100126 / VC-16).